Reading from the N-terminus, the 230-residue chain is Large ribosomal subunit protein uL1 (230 aa).

This sequence belongs to the universal ribosomal protein uL1 family. As to quaternary structure, part of the 50S ribosomal subunit.

Binds directly to 23S rRNA. The L1 stalk is quite mobile in the ribosome, and is involved in E site tRNA release. In terms of biological role, protein L1 is also a translational repressor protein, it controls the translation of the L11 operon by binding to its mRNA. The chain is Large ribosomal subunit protein uL1 from Desulforapulum autotrophicum (strain ATCC 43914 / DSM 3382 / VKM B-1955 / HRM2) (Desulfobacterium autotrophicum).